The primary structure comprises 59 residues: UPF0434 protein SO_2800 (59 aa).

Belongs to the UPF0434 family.

This Shewanella oneidensis (strain ATCC 700550 / JCM 31522 / CIP 106686 / LMG 19005 / NCIMB 14063 / MR-1) protein is UPF0434 protein SO_2800.